The sequence spans 127 residues: MDEKARLLRVRARLKRKKPKFLRQEWWRFPKFKNDPKWRRPKGIDSKMRLKKKGKPRSPSIGWSSPRAVRGLHPSGYEEVLVHNVKELEAIDPTRQAARIARTVGARKREAIIARAKELGIKVLNAR.

Residues 38–48 (WRRPKGIDSKM) show a composition bias toward basic and acidic residues. A disordered region spans residues 38-66 (WRRPKGIDSKMRLKKKGKPRSPSIGWSSP).

It belongs to the eukaryotic ribosomal protein eL32 family.

In Thermococcus gammatolerans (strain DSM 15229 / JCM 11827 / EJ3), this protein is Large ribosomal subunit protein eL32.